The chain runs to 215 residues: Probable nicotinate-nucleotide adenylyltransferase (215 aa).

This sequence belongs to the NadD family.

It catalyses the reaction nicotinate beta-D-ribonucleotide + ATP + H(+) = deamido-NAD(+) + diphosphate. It functions in the pathway cofactor biosynthesis; NAD(+) biosynthesis; deamido-NAD(+) from nicotinate D-ribonucleotide: step 1/1. Catalyzes the reversible adenylation of nicotinate mononucleotide (NaMN) to nicotinic acid adenine dinucleotide (NaAD). The protein is Probable nicotinate-nucleotide adenylyltransferase of Fervidobacterium nodosum (strain ATCC 35602 / DSM 5306 / Rt17-B1).